Reading from the N-terminus, the 782-residue chain is Endonuclease MutS2 (782 aa).

An ATP-binding site is contributed by 336 to 343 (GPNTGGKT). The 76-residue stretch at 707 to 782 (LDLRGYRYEE…GFGVTVAELK (76 aa)) folds into the Smr domain.

The protein belongs to the DNA mismatch repair MutS family. MutS2 subfamily. In terms of assembly, homodimer. Binds to stalled ribosomes, contacting rRNA.

In terms of biological role, endonuclease that is involved in the suppression of homologous recombination and thus may have a key role in the control of bacterial genetic diversity. Functionally, acts as a ribosome collision sensor, splitting the ribosome into its 2 subunits. Detects stalled/collided 70S ribosomes which it binds and splits by an ATP-hydrolysis driven conformational change. Acts upstream of the ribosome quality control system (RQC), a ribosome-associated complex that mediates the extraction of incompletely synthesized nascent chains from stalled ribosomes and their subsequent degradation. Probably generates substrates for RQC. This chain is Endonuclease MutS2, found in Staphylococcus epidermidis (strain ATCC 12228 / FDA PCI 1200).